The following is a 136-amino-acid chain: uncharacterized protein (136 aa).

The chain crosses the membrane as a helical span at residues 102–118 (FVIVFFFFSFSLSISCV).

The protein localises to the membrane. This is an uncharacterized protein from Saccharomyces cerevisiae (strain ATCC 204508 / S288c) (Baker's yeast).